The chain runs to 285 residues: Protein FD (285 aa).

Residues 1–12 (MLSSAKHQRNHR) are compositionally biased toward basic residues. 5 disordered regions span residues 1–59 (MLSS…QKRS), 79–107 (NRHSPHPQHNHEPRFRGQNHHNQNPNSIF), 115–134 (LNQEPAPTSQTTGSAPNGDS), 198–236 (SSSFGKKRGQDSNEGSGNRRHKRMIKNRESAARSRARKQ), and 257–285 (KRQQDQLKMAAAIQQPKKNTLQRSSTAPF). The segment covering 13–25 (LSATNKNQTLTKV) has biased composition (polar residues). The segment covering 26 to 50 (SSISSSSPSSSSSSSSTSSSSPLPS) has biased composition (low complexity). The span at 98–107 (HHNQNPNSIF) shows a compositional bias: polar residues. Positions 214-277 (GNRRHKRMIK…AIQQPKKNTL (64 aa)) constitute a bZIP domain. Positions 216–235 (RRHKRMIKNRESAARSRARK) are basic motif. Residues 242–263 (LELEVAHLQAENARLKRQQDQL) form a leucine-zipper region. The segment covering 272–285 (PKKNTLQRSSTAPF) has biased composition (polar residues). Residue threonine 282 is modified to Phosphothreonine.

It belongs to the bZIP family. Self-interacts. Interacts with FT and FDP/BZIP27. Interacts with GRF3 and GRF4, and in a calcium-independent manner, with CPK6 and CPK33. In terms of processing, phosphorylated at Thr-282 in a calcium-dependent manner by CPK6 and CPK33. Highly expressed in shoot apex.

The protein localises to the nucleus. In terms of biological role, transcription factor required for the transition to flowering promoted by FT. The chain is Protein FD from Arabidopsis thaliana (Mouse-ear cress).